We begin with the raw amino-acid sequence, 396 residues long: Aspartic protease 1 (396 aa).

The N-terminal stretch at methionine 1–alanine 15 is a signal peptide. The Peptidase A1 domain occupies tyrosine 68 to alanine 389. Asparagine 71 carries an N-linked (GlcNAc...) asparagine glycan. Aspartate 86 is an active-site residue. Cysteines 99 and 104 form a disulfide. Aspartate 278 is a catalytic residue. A disulfide bond links cysteine 313 and cysteine 349.

This sequence belongs to the peptidase A1 family. In terms of assembly, interacts with B.thuringiensis endotoxin Cry6Aa; the interaction prevents Cry6Aa proteolysis by host gut proteases.

The protein resides in the cytoplasm. Its subcellular location is the lysosome. It localises to the secreted. Functionally, aspartic protease, which is part of the necrosis cell death pathway. Promotes B.thuringiensis Cry6Aa stability by preventing its proteolysis by host gut proteases. Required for Cry6Aa-induced necrotic death of intestinal cells. Cry6Aa uptake into the host intestinal cells triggers an increase in intracellular Ca(2+) levels leading to lysosome rupture and to the subsequent release of asp-1 which leads to necrosis. This Caenorhabditis elegans protein is Aspartic protease 1.